The sequence spans 311 residues: UDP-N-acetylenolpyruvoylglucosamine reductase (311 aa).

The region spanning 29 to 191 (IGGKADIVLK…LSARLKLKPI (163 aa)) is the FAD-binding PCMH-type domain. Residue Arg-172 is part of the active site. Catalysis depends on Ser-223, which acts as the Proton donor. Glu-299 is an active-site residue.

It belongs to the MurB family. FAD is required as a cofactor.

It is found in the cytoplasm. The catalysed reaction is UDP-N-acetyl-alpha-D-muramate + NADP(+) = UDP-N-acetyl-3-O-(1-carboxyvinyl)-alpha-D-glucosamine + NADPH + H(+). The protein operates within cell wall biogenesis; peptidoglycan biosynthesis. Its function is as follows. Cell wall formation. The sequence is that of UDP-N-acetylenolpyruvoylglucosamine reductase from Chloroherpeton thalassium (strain ATCC 35110 / GB-78).